The primary structure comprises 157 residues: 6,7-dimethyl-8-ribityllumazine synthase (157 aa).

5-amino-6-(D-ribitylamino)uracil is bound by residues F25, 59–61 (AME), and 83–85 (AII). 88 to 89 (ST) lines the (2S)-2-hydroxy-3-oxobutyl phosphate pocket. The Proton donor role is filled by H91. F116 is a binding site for 5-amino-6-(D-ribitylamino)uracil. Residue R130 coordinates (2S)-2-hydroxy-3-oxobutyl phosphate.

The protein belongs to the DMRL synthase family.

It carries out the reaction (2S)-2-hydroxy-3-oxobutyl phosphate + 5-amino-6-(D-ribitylamino)uracil = 6,7-dimethyl-8-(1-D-ribityl)lumazine + phosphate + 2 H2O + H(+). Its pathway is cofactor biosynthesis; riboflavin biosynthesis; riboflavin from 2-hydroxy-3-oxobutyl phosphate and 5-amino-6-(D-ribitylamino)uracil: step 1/2. Its function is as follows. Catalyzes the formation of 6,7-dimethyl-8-ribityllumazine by condensation of 5-amino-6-(D-ribitylamino)uracil with 3,4-dihydroxy-2-butanone 4-phosphate. This is the penultimate step in the biosynthesis of riboflavin. This Lawsonia intracellularis (strain PHE/MN1-00) protein is 6,7-dimethyl-8-ribityllumazine synthase.